Here is a 96-residue protein sequence, read N- to C-terminus: Exodeoxyribonuclease 7 small subunit (96 aa).

The segment at 73–96 is disordered; that stretch reads RAPEQSAANDVSAPGSAEEHDHGR.

The protein belongs to the XseB family. As to quaternary structure, heterooligomer composed of large and small subunits.

Its subcellular location is the cytoplasm. The catalysed reaction is Exonucleolytic cleavage in either 5'- to 3'- or 3'- to 5'-direction to yield nucleoside 5'-phosphates.. Bidirectionally degrades single-stranded DNA into large acid-insoluble oligonucleotides, which are then degraded further into small acid-soluble oligonucleotides. This Acidothermus cellulolyticus (strain ATCC 43068 / DSM 8971 / 11B) protein is Exodeoxyribonuclease 7 small subunit.